A 51-amino-acid chain; its full sequence is Glutamine synthetase (51 aa).

It belongs to the glutamine synthetase family. Homooctamer.

It is found in the cytoplasm. It catalyses the reaction L-glutamate + NH4(+) + ATP = L-glutamine + ADP + phosphate + H(+). This is Glutamine synthetase from Vitis sp. (Grape).